The primary structure comprises 156 residues: Transcription elongation factor GreA (156 aa).

Residues 46-66 (AEYHSAREKQSFIEGRIKELE) are a coiled coil.

Belongs to the GreA/GreB family.

Necessary for efficient RNA polymerase transcription elongation past template-encoded arresting sites. The arresting sites in DNA have the property of trapping a certain fraction of elongating RNA polymerases that pass through, resulting in locked ternary complexes. Cleavage of the nascent transcript by cleavage factors such as GreA or GreB allows the resumption of elongation from the new 3'terminus. GreA releases sequences of 2 to 3 nucleotides. This chain is Transcription elongation factor GreA, found in Ruegeria pomeroyi (strain ATCC 700808 / DSM 15171 / DSS-3) (Silicibacter pomeroyi).